The primary structure comprises 36 residues: Conotoxin Bt11.4 (36 aa).

Intrachain disulfides connect cysteine 2–cysteine 16, cysteine 9–cysteine 21, cysteine 15–cysteine 26, and cysteine 20–cysteine 33.

The protein belongs to the conotoxin I1 superfamily. Expressed by the venom duct.

The protein resides in the secreted. The protein is Conotoxin Bt11.4 of Conus betulinus (Beech cone).